Reading from the N-terminus, the 433-residue chain is uncharacterized protein (433 aa).

Residues 104–349 (ERGRNIIQVR…ELEYKKKGIE (246 aa)) form the Radical SAM core domain. [4Fe-4S] cluster contacts are provided by Cys118, Cys122, and Cys125. S-adenosyl-L-methionine contacts are provided by residues 171–172 (GE) and 236–238 (MLS). Residues 370–433 (PFKVGEVTKV…KDNIIVAELV (64 aa)) form the TRAM domain.

This sequence belongs to the radical SAM superfamily. [4Fe-4S] cluster serves as cofactor.

This is an uncharacterized protein from Methanocaldococcus jannaschii (strain ATCC 43067 / DSM 2661 / JAL-1 / JCM 10045 / NBRC 100440) (Methanococcus jannaschii).